The sequence spans 222 residues: Probable nicotinate-nucleotide adenylyltransferase (222 aa).

Belongs to the NadD family.

The enzyme catalyses nicotinate beta-D-ribonucleotide + ATP + H(+) = deamido-NAD(+) + diphosphate. It functions in the pathway cofactor biosynthesis; NAD(+) biosynthesis; deamido-NAD(+) from nicotinate D-ribonucleotide: step 1/1. In terms of biological role, catalyzes the reversible adenylation of nicotinate mononucleotide (NaMN) to nicotinic acid adenine dinucleotide (NaAD). In Pseudomonas syringae pv. tomato (strain ATCC BAA-871 / DC3000), this protein is Probable nicotinate-nucleotide adenylyltransferase.